Here is a 1248-residue protein sequence, read N- to C-terminus: Structural maintenance of chromosomes protein 1B (1248 aa).

32-39 (GPNGSGKS) is an ATP binding site. Residues 163 to 502 (EFIGEYEAKK…EGKRQQKRAE (340 aa)) are a coiled coil. Residues 514–629 (SVFGRLLDLC…ETVEEARHIA (116 aa)) form the SMC hinge domain. N6-acetyllysine occurs at positions 648, 713, and 1032. The stretch at 666–912 (WDEKELHNLR…REVGKLQKEV (247 aa)) forms a coiled coil. Over residues 1219–1228 (PDTEDQEGSR) the composition is skewed to basic and acidic residues. Residues 1219–1248 (PDTEDQEGSRSHRKPRVPRVSMSPKSPQSR) are disordered.

The protein belongs to the SMC family. SMC1 subfamily. As to quaternary structure, forms a heterodimer with SMC3. Component of a meiosis-specific cohesin complex, probably composed of the SMC1B and SMC3 heterodimer attached via their SMC hinge domain, RAD21 (or its meiosis-specific related protein REC8), which link them, and STAG3, which interacts with RAD21 or REC8. The cohesin complex interacts with the cohesin loading complex subunits NIPBL/Scc2 (via HEAT repeats) and MAU2/Scc4. NIPBL directly contacts all members of the complex, RAD21, SMC1A/B, SMC3 and STAG1. In terms of tissue distribution, spermatocytes (at protein level). Testis and ovary specific. Not expressed in somatic cells.

The protein resides in the nucleus. Its subcellular location is the chromosome. The protein localises to the centromere. Meiosis-specific component of cohesin complex. Required for the maintenance of meiotic cohesion, but not, or only to a minor extent, for its establishment. Contributes to axial element (AE) formation and the organization of chromatin loops along the AE. Plays a key role in synapsis, recombination and chromosome movements. The cohesin complex is required for the cohesion of sister chromatids after DNA replication. The cohesin complex apparently forms a large proteinaceous ring within which sister chromatids can be trapped. At anaphase, the complex is cleaved and dissociates from chromatin, allowing sister chromatids to segregate. The meiosis-specific cohesin complex probably replaces mitosis specific cohesin complex when it dissociates from chromatin during prophase I. The protein is Structural maintenance of chromosomes protein 1B (Smc1b) of Mus musculus (Mouse).